We begin with the raw amino-acid sequence, 125 residues long: UPF0738 protein GTNG_0708 (125 aa).

The protein belongs to the UPF0738 family.

The protein is UPF0738 protein GTNG_0708 of Geobacillus thermodenitrificans (strain NG80-2).